The sequence spans 372 residues: MTSLPLTPVNPDAPARRAAMPPRHLADFDLAGRQTLVTELGEPRFRARQVSTHYFGRLVRDPEQMTDLPAATREKLADQLLPTLLTPVRELACDDGATHKALWRLHDGSLVESVLMGYPDRVTVCLSSQAGCGMACPFCATGQAGLTRNLSTAEIVDQAVYLAGVAASGAVAGSPPRLSRVVFMGMGEPLANYNRVVAAIRRLVAPSPEGLGLSQRHITVSTVGLVPAIRRLASEDLSVTLALSLHAPDDELRDELVPVNQRWKVSEVLEAAWEYAARTGRRVSIEYAMIKDVNDQPWRADLLGRLLADRLAHVNLIPLNPTPGSRWDASPKPVEREFVRRLRAAGVSTTVRDTRGREIDGACGQLAAAEGP.

The interval 1–20 is disordered; the sequence is MTSLPLTPVNPDAPARRAAM. Glutamate 112 functions as the Proton acceptor in the catalytic mechanism. Residues 118-357 form the Radical SAM core domain; that stretch reads YPDRVTVCLS…STTVRDTRGR (240 aa). A disulfide bridge connects residues cysteine 125 and cysteine 363. Cysteine 132, cysteine 136, and cysteine 139 together coordinate [4Fe-4S] cluster. S-adenosyl-L-methionine-binding positions include 187–188, serine 221, 244–246, and asparagine 320; these read GE and SLH. The S-methylcysteine intermediate role is filled by cysteine 363.

This sequence belongs to the radical SAM superfamily. RlmN family. [4Fe-4S] cluster is required as a cofactor.

It is found in the cytoplasm. It carries out the reaction adenosine(2503) in 23S rRNA + 2 reduced [2Fe-2S]-[ferredoxin] + 2 S-adenosyl-L-methionine = 2-methyladenosine(2503) in 23S rRNA + 5'-deoxyadenosine + L-methionine + 2 oxidized [2Fe-2S]-[ferredoxin] + S-adenosyl-L-homocysteine. It catalyses the reaction adenosine(37) in tRNA + 2 reduced [2Fe-2S]-[ferredoxin] + 2 S-adenosyl-L-methionine = 2-methyladenosine(37) in tRNA + 5'-deoxyadenosine + L-methionine + 2 oxidized [2Fe-2S]-[ferredoxin] + S-adenosyl-L-homocysteine. Specifically methylates position 2 of adenine 2503 in 23S rRNA and position 2 of adenine 37 in tRNAs. The protein is Probable dual-specificity RNA methyltransferase RlmN of Salinispora tropica (strain ATCC BAA-916 / DSM 44818 / JCM 13857 / NBRC 105044 / CNB-440).